A 268-amino-acid polypeptide reads, in one-letter code: UPF0328 protein ECU03_0040 (268 aa).

Belongs to the UPF0328 family.

In Encephalitozoon cuniculi (strain GB-M1) (Microsporidian parasite), this protein is UPF0328 protein ECU03_0040.